A 253-amino-acid chain; its full sequence is Ribosome-inactivating protein saporin-5 (253 aa).

Glu176 is an active-site residue.

This sequence belongs to the ribosome-inactivating protein family. Type 1 RIP subfamily.

The enzyme catalyses Endohydrolysis of the N-glycosidic bond at one specific adenosine on the 28S rRNA.. Functionally, ribosome-inactivating protein of type 1, inhibits protein synthesis in animal cells. The chain is Ribosome-inactivating protein saporin-5 (SAP5) from Saponaria officinalis (Common soapwort).